An 88-amino-acid polypeptide reads, in one-letter code: Large ribosomal subunit protein bL31B (88 aa).

Belongs to the bacterial ribosomal protein bL31 family. Type B subfamily. As to quaternary structure, part of the 50S ribosomal subunit.

This Corynebacterium diphtheriae (strain ATCC 700971 / NCTC 13129 / Biotype gravis) protein is Large ribosomal subunit protein bL31B.